A 63-amino-acid chain; its full sequence is MKAQELRNKSVEELNGELVNLLGEQFKLRMQAATGQLQQTHQLKQVRRSIAQVKTVLTEKAGE.

This sequence belongs to the universal ribosomal protein uL29 family.

The sequence is that of Large ribosomal subunit protein uL29 from Glaesserella parasuis serovar 5 (strain SH0165) (Haemophilus parasuis).